A 410-amino-acid polypeptide reads, in one-letter code: Shaggy-related protein kinase epsilon (410 aa).

An N-acetylalanine modification is found at Ala2. A Protein kinase domain is found at 74–358; that stretch reads YMAERIVGQG…AMEAIVHPFF (285 aa). Residues 80 to 88 and Lys103 contribute to the ATP site; that span reads VGQGSFGIV. The active-site Proton acceptor is Asp199. Tyr234 carries the phosphotyrosine modification.

It belongs to the protein kinase superfamily. CMGC Ser/Thr protein kinase family. GSK-3 subfamily. Binds to KIB1. In terms of processing, autophosphorylated mainly on threonine and serine residues.

It carries out the reaction L-seryl-[protein] + ATP = O-phospho-L-seryl-[protein] + ADP + H(+). The enzyme catalyses L-threonyl-[protein] + ATP = O-phospho-L-threonyl-[protein] + ADP + H(+). Its function is as follows. May mediate extracellular signals to regulate transcription in differentiating cells. The sequence is that of Shaggy-related protein kinase epsilon (ASK5) from Arabidopsis thaliana (Mouse-ear cress).